Consider the following 184-residue polypeptide: Peptidyl-tRNA hydrolase (184 aa).

Residue Tyr-14 participates in tRNA binding. Catalysis depends on His-19, which acts as the Proton acceptor. 3 residues coordinate tRNA: Phe-64, Asn-66, and Asn-112.

The protein belongs to the PTH family. In terms of assembly, monomer.

It is found in the cytoplasm. The enzyme catalyses an N-acyl-L-alpha-aminoacyl-tRNA + H2O = an N-acyl-L-amino acid + a tRNA + H(+). Hydrolyzes ribosome-free peptidyl-tRNAs (with 1 or more amino acids incorporated), which drop off the ribosome during protein synthesis, or as a result of ribosome stalling. Functionally, catalyzes the release of premature peptidyl moieties from peptidyl-tRNA molecules trapped in stalled 50S ribosomal subunits, and thus maintains levels of free tRNAs and 50S ribosomes. In Listeria welshimeri serovar 6b (strain ATCC 35897 / DSM 20650 / CCUG 15529 / CIP 8149 / NCTC 11857 / SLCC 5334 / V8), this protein is Peptidyl-tRNA hydrolase.